Reading from the N-terminus, the 332-residue chain is 2,7-dihydroxy-5-methyl-1-naphthoate 7-O-methyltransferase (332 aa).

Arg-11 contributes to the substrate binding site. Residues Trp-133, His-153, 175–179, Gly-177, Asp-200, 227–228, and 242–243 each bind S-adenosyl-L-methionine; these read DVGGG, SF, and SA. The Proton acceptor role is filled by His-246. Position 247 (Asp-247) interacts with substrate.

This sequence belongs to the class I-like SAM-binding methyltransferase superfamily. Cation-independent O-methyltransferase family.

The catalysed reaction is 2,7-dihydroxy-5-methyl-1-naphthoate + S-adenosyl-L-methionine = 2-hydroxy-7-methoxy-5-methyl-1-naphthoate + S-adenosyl-L-homocysteine + H(+). It participates in antibiotic biosynthesis. Its function is as follows. S-adenosyl-L-methionine-dependent O-methyltransferase that catalyzes regiospecific methylation at the 7-hydroxy group of 2,7-dihydroxy-5-methyl-1-naphthoate in the biosynthesis of the naphthoate moiety of the neocarzinostatin chromophore. Also recognizes other dihydroxynaphthoate as substrates and catalyzes their regiospecific O-methylation. The carboxylate and its ortho-hydroxy groups of the substrate appear to be crucial for NcsB1 substrate recognition and binding, and O-methylation takes place only at the free hydroxy group of these dihydroxynaphthoic acids. This chain is 2,7-dihydroxy-5-methyl-1-naphthoate 7-O-methyltransferase, found in Streptomyces carzinostaticus.